The chain runs to 757 residues: Catalase-peroxidase (757 aa).

The segment at residues 101–248 (WHSAGTYRIG…LAAVQMGLIY (148 aa)) is a cross-link (tryptophyl-tyrosyl-methioninium (Trp-Tyr) (with M-274)). Residue H102 is the Proton acceptor of the active site. The segment at 213-232 (VHHPDEHRGAKEKASKNSDS) is disordered. A cross-link (tryptophyl-tyrosyl-methioninium (Tyr-Met) (with W-101)) is located at residues 248–274 (YVNPEGPDGCPDPLASARDIRETFARM). H289 serves as a coordination point for heme b.

Belongs to the peroxidase family. Peroxidase/catalase subfamily. In terms of assembly, homodimer or homotetramer. Heme b serves as cofactor. Post-translationally, formation of the three residue Trp-Tyr-Met cross-link is important for the catalase, but not the peroxidase activity of the enzyme.

The catalysed reaction is H2O2 + AH2 = A + 2 H2O. It catalyses the reaction 2 H2O2 = O2 + 2 H2O. Functionally, bifunctional enzyme with both catalase and broad-spectrum peroxidase activity. This chain is Catalase-peroxidase, found in Xylella fastidiosa (strain M23).